We begin with the raw amino-acid sequence, 809 residues long: Pentatricopeptide repeat-containing protein At1g11290, chloroplastic (809 aa).

A chloroplast-targeting transit peptide spans 1 to 46; it reads MSSQLVQFSTVPQIPNPPSRHRHFLSERNYIPANVYEHPAALLLER. 16 PPR repeats span residues 68-98, 99-133, 134-168, 169-199, 200-234, 235-269, 270-300, 301-335, 336-370, 371-401, 402-436, 437-471, 472-502, 503-537, 538-568, and 574-604; these read EHFF…IDSK, LNVL…DVEP, VVYN…GFSL, DLFA…MPER, DLVS…NLKP, SFIT…GFDS, LVNI…MLER, NVVS…GVKP, TDVS…GLDR, NVSV…LQSR, TLVS…TVKP, DTFT…CLDK, NVFV…MSER, HVTT…TIKP, NGVT…MKEN, and SMDH…MPVK. The type E motif stretch occupies residues 609–684; the sequence is VYGAMLGACQ…TPGCSMVEIK (76 aa). The tract at residues 685 to 715 is type E(+) motif; it reads NEVHSFFSGSTAHPDSKKIYAFLEKLICHIK. The tract at residues 716–809 is type DYW motif; the sequence is EAGYVPDTNL…NGACSCGDYW (94 aa).

This sequence belongs to the PPR family. PCMP-H subfamily.

The protein localises to the plastid. The protein resides in the chloroplast. Involved in multiple sites RNA editing events in chloroplasts. Involved in the editing of the site 7 of ndhB (ndhB-7) and site 5 of ndhD (ndhD-5) transcripts, which are two plastid-encoded subunits of the chloroplast NAD(P)H dehydrogenase (NDH) complex. Involved in the editing of the site 3 of rpoB (rpoB-3) transcript. Required for the activity of the NDH complex of the photosynthetic electron transport chain. Possesses low endoribonuclease activity in vitro. The sequence is that of Pentatricopeptide repeat-containing protein At1g11290, chloroplastic (PCMP-H40) from Arabidopsis thaliana (Mouse-ear cress).